The chain runs to 101 residues: Class II hydrophobin 5 (101 aa).

An N-terminal signal peptide occupies residues 1 to 15; it reads MQLTALLALATLAIA. 4 cysteine pairs are disulfide-bonded: C33/C83, C44/C74, C45/C57, and C84/C95.

This sequence belongs to the cerato-ulmin hydrophobin family. Homodimer. Homodimers further self-assemble to form highly ordered films at water-air interfaces through intermolecular interactions.

The protein localises to the secreted. The protein resides in the cell wall. Its function is as follows. Aerial growth, conidiation, and dispersal of filamentous fungi in the environment rely upon a capability of their secreting small amphipathic proteins called hydrophobins (HPBs) with low sequence identity. Class I can self-assemble into an outermost layer of rodlet bundles on aerial cell surfaces, conferring cellular hydrophobicity that supports fungal growth, development and dispersal; whereas Class II form highly ordered films at water-air interfaces through intermolecular interactions but contribute nothing to the rodlet structure. The sequence is that of Class II hydrophobin 5 from Trichoderma asperellum (strain ATCC 204424 / CBS 433.97 / NBRC 101777).